Reading from the N-terminus, the 240-residue chain is 1-(5-phosphoribosyl)-5-[(5-phosphoribosylamino)methylideneamino] imidazole-4-carboxamide isomerase (240 aa).

Asp-8 serves as the catalytic Proton acceptor. The Proton donor role is filled by Asp-129.

Belongs to the HisA/HisF family.

The protein resides in the cytoplasm. It carries out the reaction 1-(5-phospho-beta-D-ribosyl)-5-[(5-phospho-beta-D-ribosylamino)methylideneamino]imidazole-4-carboxamide = 5-[(5-phospho-1-deoxy-D-ribulos-1-ylimino)methylamino]-1-(5-phospho-beta-D-ribosyl)imidazole-4-carboxamide. Its pathway is amino-acid biosynthesis; L-histidine biosynthesis; L-histidine from 5-phospho-alpha-D-ribose 1-diphosphate: step 4/9. This is 1-(5-phosphoribosyl)-5-[(5-phosphoribosylamino)methylideneamino] imidazole-4-carboxamide isomerase from Listeria monocytogenes serotype 4b (strain CLIP80459).